The chain runs to 457 residues: Serine/threonine-protein phosphatase 2A regulatory subunit B'' subunit gamma (457 aa).

EF-hand domains follow at residues 276 to 311 and 344 to 379; these read PSALRVYGQYLNLDKDHNGMLSKEELSRYGTGTLTS and KEPAALQYIFKLLDMENKGYLNVFALNYFFRAIQEQ. 5 residues coordinate Ca(2+): aspartate 289, aspartate 291, asparagine 293, methionine 295, and glutamate 300.

It is found in the nucleus. Its subcellular location is the cytoplasm. In terms of biological role, possible role in the regulation of cell death. This Danio rerio (Zebrafish) protein is Serine/threonine-protein phosphatase 2A regulatory subunit B'' subunit gamma (ppp2r3c).